Reading from the N-terminus, the 369-residue chain is Anhydro-N-acetylmuramic acid kinase (369 aa).

12-19 is an ATP binding site; sequence GTSLDGVD.

This sequence belongs to the anhydro-N-acetylmuramic acid kinase family.

It carries out the reaction 1,6-anhydro-N-acetyl-beta-muramate + ATP + H2O = N-acetyl-D-muramate 6-phosphate + ADP + H(+). It functions in the pathway amino-sugar metabolism; 1,6-anhydro-N-acetylmuramate degradation. Its pathway is cell wall biogenesis; peptidoglycan recycling. Functionally, catalyzes the specific phosphorylation of 1,6-anhydro-N-acetylmuramic acid (anhMurNAc) with the simultaneous cleavage of the 1,6-anhydro ring, generating MurNAc-6-P. Is required for the utilization of anhMurNAc either imported from the medium or derived from its own cell wall murein, and thus plays a role in cell wall recycling. This is Anhydro-N-acetylmuramic acid kinase from Escherichia coli O45:K1 (strain S88 / ExPEC).